The following is a 125-amino-acid chain: Small ribosomal subunit protein eS8 (125 aa).

The interval 1–20 (MIWQGRSRRKPSGGFYRKAR) is disordered.

This sequence belongs to the eukaryotic ribosomal protein eS8 family. As to quaternary structure, part of the 30S ribosomal subunit.

The protein is Small ribosomal subunit protein eS8 (rps8e) of Archaeoglobus fulgidus (strain ATCC 49558 / DSM 4304 / JCM 9628 / NBRC 100126 / VC-16).